The chain runs to 521 residues: Protein nucleotidyltransferase YdiU (521 aa).

Residues Gly109, Gly111, Arg112, Lys131, Asp143, Gly144, Arg194, and Arg201 each coordinate ATP. Residue Asp270 is the Proton acceptor of the active site. 2 residues coordinate Mg(2+): Asn271 and Asp280. Position 280 (Asp280) interacts with ATP.

Belongs to the SELO family. The cofactor is Mg(2+). It depends on Mn(2+) as a cofactor.

It catalyses the reaction L-seryl-[protein] + ATP = 3-O-(5'-adenylyl)-L-seryl-[protein] + diphosphate. The catalysed reaction is L-threonyl-[protein] + ATP = 3-O-(5'-adenylyl)-L-threonyl-[protein] + diphosphate. It carries out the reaction L-tyrosyl-[protein] + ATP = O-(5'-adenylyl)-L-tyrosyl-[protein] + diphosphate. The enzyme catalyses L-histidyl-[protein] + UTP = N(tele)-(5'-uridylyl)-L-histidyl-[protein] + diphosphate. It catalyses the reaction L-seryl-[protein] + UTP = O-(5'-uridylyl)-L-seryl-[protein] + diphosphate. The catalysed reaction is L-tyrosyl-[protein] + UTP = O-(5'-uridylyl)-L-tyrosyl-[protein] + diphosphate. In terms of biological role, nucleotidyltransferase involved in the post-translational modification of proteins. It can catalyze the addition of adenosine monophosphate (AMP) or uridine monophosphate (UMP) to a protein, resulting in modifications known as AMPylation and UMPylation. The protein is Protein nucleotidyltransferase YdiU of Burkholderia pseudomallei (strain 1106a).